We begin with the raw amino-acid sequence, 420 residues long: MFDTVCTLPLSADLFSQALHPKEPVVSVGLSSGHVQTFRLPSDEVDSDDDGASTSSSRTGRGHIDTMWRTRRHKGSCRCLGFGVDGEMLYSAGTDGLVKAAKAETGVVENKIAIPLDKNGSVDAPTIIHALSPQTLLLATDSSALHLYDLRIPYSKVSARPEQSHHPHDDYISSLTPLPPSDTSTSGFSKQWVTTGGTTLAVTDLRRGVLVRSEDQEEELVSSVYIDGLPSSGTSRGAKVVVGGSGGVLTLWEKGAWDDQDERVYVQRESGGGESLETLAVVPDDLGKGKMVAVGLGNGAVKFVRIGANRVVSEVMHDETEGVVGLGFDVEGRMVSGGGQIVKVWHEAVDSGDGVNGNETGGKRAFGDDSDEDSDDGDDDDDSGDSDQENKRGDARKKRKKGKTPKRGGGQAVMAFHDLD.

WD repeat units lie at residues Pro9–Asp48, Arg72–Lys111, Asp117–Ser158, Val221–Glu262, Gly271–Glu314, and Asp318–Val355. A disordered region spans residues Arg39 to His63. Residues Asp350–Asp420 are disordered. Residues Asp368–Asp387 are compositionally biased toward acidic residues. Residues Asp394–Lys406 are compositionally biased toward basic residues.

This sequence belongs to the WD repeat WDR55 family.

The protein localises to the nucleus. It is found in the nucleolus. The sequence is that of WD repeat-containing protein jip5 (jip5) from Aspergillus terreus (strain NIH 2624 / FGSC A1156).